Here is a 131-residue protein sequence, read N- to C-terminus: MVRMSRPLFLDWAWRPLCSPSQSLPLTYGPEGWILQWKGTCRQQTALHCPFDFPQAPLRGRHTLSQVPNKGHEKASAVQLPEKQGTDQSRRGPTSAVTKARTSYPESETFIVYLCSYFWNSSKGVYMSGST.

The tract at residues 60 to 100 is disordered; that stretch reads GRHTLSQVPNKGHEKASAVQLPEKQGTDQSRRGPTSAVTKA. The span at 91–100 shows a compositional bias: polar residues; that stretch reads RGPTSAVTKA.

This is an uncharacterized protein from Homo sapiens (Human).